A 228-amino-acid polypeptide reads, in one-letter code: Sodium channel regulatory subunit beta-4 (228 aa).

Positions 1–30 (MSRAGNRGNTQARWLGTGLLGLFLLPMYLS) are cleaved as a signal peptide. The Ig-like C2-type domain occupies 31–148 (LEVSVGKATT…KDLNNSATIF (118 aa)). At 31 to 161 (LEVSVGKATT…VDKLEKVDNT (131 aa)) the chain is on the extracellular side. Residues asparagine 45, asparagine 71, asparagine 113, and asparagine 142 are each glycosylated (N-linked (GlcNAc...) asparagine). A disulfide bridge connects residues cysteine 53 and cysteine 131. The helical transmembrane segment at 162-182 (VTLIILAVVGGVIGLLVCILL) threads the bilayer. Residues 183–228 (LKKLITFILKKTREKKKECLVSSSGNDNTENGLPGSKAEEKPPTKV) lie on the Cytoplasmic side of the membrane. Residues 199-228 (KECLVSSSGNDNTENGLPGSKAEEKPPTKV) form a disordered region. The segment covering 203–213 (VSSSGNDNTEN) has biased composition (polar residues). The segment covering 219-228 (KAEEKPPTKV) has biased composition (basic and acidic residues).

The protein belongs to the sodium channel auxiliary subunit SCN4B (TC 8.A.17) family. A voltage-gated sodium (Nav) channel consists of an ion-conducting pore-forming alpha subunit functional on its own that is regulated by one or more beta subunits. The beta subunit SCN4B is disulfide-linked to the pore-forming alpha subunit. Interacts with SCN1A; regulatory subunit of SCN1A/Nav1.1. Interacts with SCN2A; regulatory subunit of SCN2A/Nav1.2. Contains an interchain disulfide bond with SCN2A.

It is found in the cell membrane. Its function is as follows. Regulatory subunit of multiple voltage-gated sodium (Nav) channels directly mediating the depolarization of excitable membranes. Navs, also called VGSCs (voltage-gated sodium channels) or VDSCs (voltage-dependent sodium channels), operate by switching between closed and open conformations depending on the voltage difference across the membrane. In the open conformation they allow Na(+) ions to selectively pass through the pore, along their electrochemical gradient. The influx of Na+ ions provokes membrane depolarization, initiating the propagation of electrical signals throughout cells and tissues. The accessory beta subunits participate in localization and functional modulation of the Nav channels. Modulates the activity of SCN1A/Nav1.1. Modulates the activity of SCN2A/Nav1.2. This chain is Sodium channel regulatory subunit beta-4, found in Mus musculus (Mouse).